A 523-amino-acid polypeptide reads, in one-letter code: Synaptotagmin-10 (523 aa).

Residues 1–55 (MSFHKEDGVNSLCQKALHIVTELCFAGQVEWEKCSGIFPRDRGSQGGSSTDISVS) lie on the Vesicular side of the membrane. The interval 13 to 35 (CQKALHIVTELCFAGQVEWEKCS) is cysteine motif. Residues 56–76 (LLAVVVSFCGLALLVVSLFVF) form a helical membrane-spanning segment. The Cytoplasmic segment spans residues 77-523 (WKLCWPCWKS…CPSPKPPSTP (447 aa)). The residue at position 136 (T136) is a Phosphothreonine. 2 consecutive C2 domains span residues 231 to 352 (ICGK…TVWK) and 363 to 496 (DLGE…THWH). Ca(2+)-binding residues include D262, D268, D320, F321, D322, S325, D328, D394, D400, D454, and D456.

Belongs to the synaptotagmin family. As to quaternary structure, homodimer; disulfide-linked via the cysteine motif. Can also form heterodimers with SYT3, SYT6, SYT7 and SYT9. Ca(2+) serves as cofactor.

It is found in the cytoplasmic vesicle. The protein localises to the secretory vesicle membrane. Functionally, ca(2+) sensor specifically required for the Ca(2+)-dependent exocytosis of secretory vesicles containing IGF1 in neurons of the olfactory bulb. Exocytosis of IGF1 is required for sensory perception of smell. Not involved in Ca(2+)-dependent synaptic vesicle exocytosis. Acts through Ca(2+) and phospholipid binding to the C2 domain: Ca(2+) induces binding of the C2-domains to phospholipid membranes and to assembled SNARE-complexes; both actions contribute to triggering exocytosis. The chain is Synaptotagmin-10 (SYT10) from Pongo abelii (Sumatran orangutan).